The chain runs to 41 residues: MKVVSSLKSLKKRDKDCQIVKRRGKIFVINKKNKRFKAKQG.

Belongs to the bacterial ribosomal protein bL36 family.

This chain is Large ribosomal subunit protein bL36, found in Rickettsia africae (strain ESF-5).